Consider the following 471-residue polypeptide: ATP synthase subunit beta (471 aa).

158–165 (GGAGCGKT) contacts ATP.

This sequence belongs to the ATPase alpha/beta chains family. As to quaternary structure, F-type ATPases have 2 components, CF(1) - the catalytic core - and CF(0) - the membrane proton channel. CF(1) has five subunits: alpha(3), beta(3), gamma(1), delta(1), epsilon(1). CF(0) has three main subunits: a(1), b(2) and c(9-12). The alpha and beta chains form an alternating ring which encloses part of the gamma chain. CF(1) is attached to CF(0) by a central stalk formed by the gamma and epsilon chains, while a peripheral stalk is formed by the delta and b chains.

The protein resides in the cell inner membrane. The catalysed reaction is ATP + H2O + 4 H(+)(in) = ADP + phosphate + 5 H(+)(out). Its function is as follows. Produces ATP from ADP in the presence of a proton gradient across the membrane. The catalytic sites are hosted primarily by the beta subunits. This Desulfotalea psychrophila (strain LSv54 / DSM 12343) protein is ATP synthase subunit beta.